Reading from the N-terminus, the 136-residue chain is Large ribosomal subunit protein uL16 (136 aa).

This sequence belongs to the universal ribosomal protein uL16 family. As to quaternary structure, part of the 50S ribosomal subunit.

Its function is as follows. Binds 23S rRNA and is also seen to make contacts with the A and possibly P site tRNAs. In Photobacterium profundum (strain SS9), this protein is Large ribosomal subunit protein uL16.